Reading from the N-terminus, the 307-residue chain is uncharacterized protein (307 aa).

An ABC transporter domain is found at 5–233 (VQTNGLTKTY…NTEYIELVTP (229 aa)). Position 37–44 (37–44 (GPNGAGKT)) interacts with ATP.

The protein belongs to the ABC transporter superfamily.

This is an uncharacterized protein from Bacillus subtilis (strain 168).